The primary structure comprises 700 residues: pH-response regulator protein palI/prr-5 (700 aa).

Residues Met-1 to Leu-8 lie on the Cytoplasmic side of the membrane. Residues Ala-9–Ile-29 form a helical membrane-spanning segment. Over Lys-30–Ser-90 the chain is Extracellular. A helical transmembrane segment spans residues Ile-91 to Val-111. Residues Ala-112–Tyr-123 lie on the Cytoplasmic side of the membrane. The chain crosses the membrane as a helical span at residues Leu-124–Val-144. Residues Asp-145–His-152 are Extracellular-facing. The helical transmembrane segment at Leu-153–Val-173 threads the bilayer. The Cytoplasmic portion of the chain corresponds to Thr-174–Arg-700. Disordered stretches follow at residues Ser-226–Asp-491, Val-507–Glu-560, and Asp-573–Arg-700. The span at Lys-234–Ile-252 shows a compositional bias: basic and acidic residues. Residues Gly-320–Arg-378 are compositionally biased toward gly residues. A compositionally biased stretch (polar residues) spans Ser-414–Gly-424. Composition is skewed to polar residues over residues Ser-593 to Tyr-603 and Glu-615 to Asn-637. Low complexity predominate over residues Val-657–Ala-671.

The protein belongs to the palI/RIM9 family.

It localises to the cell membrane. Required for the proteolytic cleavage of the transcription factor pacc-1 in response to alkaline ambient pH. This is pH-response regulator protein palI/prr-5 (prr-5) from Neurospora crassa (strain ATCC 24698 / 74-OR23-1A / CBS 708.71 / DSM 1257 / FGSC 987).